We begin with the raw amino-acid sequence, 154 residues long: RxLR effector protein PITG_12737 (154 aa).

Residues 1-16 (MRVYFILILAVATVSG) form the signal peptide. Positions 42–58 (RLLRAELTTDETYPEER) match the RxLR-dEER motif.

This sequence belongs to the RxLR effector family.

The protein localises to the secreted. It is found in the host nucleus. Its subcellular location is the host cytoplasm. Its function is as follows. Effector that enhances P.infestans colonization of Nicotiana benthamiana leaves. This Phytophthora infestans (strain T30-4) (Potato late blight agent) protein is RxLR effector protein PITG_12737.